Reading from the N-terminus, the 280-residue chain is Extracellular metalloprotease GLRG_06286 (280 aa).

A signal peptide spans 1 to 17 (MQVTFTLVAALAGMASA). An N-linked (GlcNAc...) asparagine glycan is attached at Asn-51. His-196 contributes to the Zn(2+) binding site. The active site involves Glu-197. His-200 serves as a coordination point for Zn(2+). The disordered stretch occupies residues 217-236 (DSIADTPAQSSPSSGCPVGR). Cys-232 and Cys-259 are disulfide-bonded.

This sequence belongs to the peptidase M43B family.

It is found in the secreted. In terms of biological role, secreted metalloproteinase that allows assimilation of proteinaceous substrates. This Colletotrichum graminicola (strain M1.001 / M2 / FGSC 10212) (Maize anthracnose fungus) protein is Extracellular metalloprotease GLRG_06286.